The following is a 514-amino-acid chain: tRNA-2-methylthio-N(6)-dimethylallyladenosine synthase (514 aa).

Positions 1 to 21 (MNEEQRKASSVDVLAERDKKA) are disordered. In terms of domain architecture, MTTase N-terminal spans 68–186 (RTFLIKTYGC…LPEILEEAYL (119 aa)). Residues Cys77, Cys113, Cys147, Cys223, Cys227, and Cys230 each coordinate [4Fe-4S] cluster. The region spanning 209–440 (REGNIKAWVN…KKVGHYSQIA (232 aa)) is the Radical SAM core domain. Residues 442-505 (SKYEGQTVTV…QYSLNGSFVK (64 aa)) form the TRAM domain.

The protein belongs to the methylthiotransferase family. MiaB subfamily. As to quaternary structure, monomer. [4Fe-4S] cluster is required as a cofactor.

Its subcellular location is the cytoplasm. It catalyses the reaction N(6)-dimethylallyladenosine(37) in tRNA + (sulfur carrier)-SH + AH2 + 2 S-adenosyl-L-methionine = 2-methylsulfanyl-N(6)-dimethylallyladenosine(37) in tRNA + (sulfur carrier)-H + 5'-deoxyadenosine + L-methionine + A + S-adenosyl-L-homocysteine + 2 H(+). Its function is as follows. Catalyzes the methylthiolation of N6-(dimethylallyl)adenosine (i(6)A), leading to the formation of 2-methylthio-N6-(dimethylallyl)adenosine (ms(2)i(6)A) at position 37 in tRNAs that read codons beginning with uridine. The sequence is that of tRNA-2-methylthio-N(6)-dimethylallyladenosine synthase from Staphylococcus aureus (strain MRSA252).